The sequence spans 990 residues: Mediator of RNA polymerase II transcription subunit 5 (990 aa).

The protein belongs to the Mediator complex subunit 5 family. Component of the Mediator complex.

It is found in the nucleus. Functionally, component of the Mediator complex, a coactivator involved in the regulated transcription of nearly all RNA polymerase II-dependent genes. Mediator functions as a bridge to convey information from gene-specific regulatory proteins to the basal RNA polymerase II transcription machinery. Mediator is recruited to promoters by direct interactions with regulatory proteins and serves as a scaffold for the assembly of a functional preinitiation complex with RNA polymerase II and the general transcription factors. This is Mediator of RNA polymerase II transcription subunit 5 (NUT1) from Debaryomyces hansenii (strain ATCC 36239 / CBS 767 / BCRC 21394 / JCM 1990 / NBRC 0083 / IGC 2968) (Yeast).